The following is a 264-amino-acid chain: Rhamnosyltransferase WbbL (264 aa).

This sequence belongs to the glycosyltransferase 2 family.

It functions in the pathway bacterial outer membrane biogenesis; lipopolysaccharide biosynthesis. Its function is as follows. Rhamnosyltransferase involved in lipopolysaccharide biosynthesis. In Escherichia coli (strain K12), this protein is Rhamnosyltransferase WbbL (wbbL).